The following is a 138-amino-acid chain: Ribosome-binding factor A (138 aa).

It belongs to the RbfA family. As to quaternary structure, monomer. Binds 30S ribosomal subunits, but not 50S ribosomal subunits or 70S ribosomes.

Its subcellular location is the cytoplasm. Its function is as follows. One of several proteins that assist in the late maturation steps of the functional core of the 30S ribosomal subunit. Associates with free 30S ribosomal subunits (but not with 30S subunits that are part of 70S ribosomes or polysomes). Required for efficient processing of 16S rRNA. May interact with the 5'-terminal helix region of 16S rRNA. In Pseudoalteromonas atlantica (strain T6c / ATCC BAA-1087), this protein is Ribosome-binding factor A.